Reading from the N-terminus, the 231-residue chain is Phosphatidylserine decarboxylase proenzyme (231 aa).

Residue serine 188 is the Schiff-base intermediate with substrate; via pyruvic acid of the active site. Serine 188 is modified (pyruvic acid (Ser); by autocatalysis).

Belongs to the phosphatidylserine decarboxylase family. PSD-A subfamily. Heterodimer of a large membrane-associated beta subunit and a small pyruvoyl-containing alpha subunit. Requires pyruvate as cofactor. Is synthesized initially as an inactive proenzyme. Formation of the active enzyme involves a self-maturation process in which the active site pyruvoyl group is generated from an internal serine residue via an autocatalytic post-translational modification. Two non-identical subunits are generated from the proenzyme in this reaction, and the pyruvate is formed at the N-terminus of the alpha chain, which is derived from the carboxyl end of the proenzyme. The post-translation cleavage follows an unusual pathway, termed non-hydrolytic serinolysis, in which the side chain hydroxyl group of the serine supplies its oxygen atom to form the C-terminus of the beta chain, while the remainder of the serine residue undergoes an oxidative deamination to produce ammonia and the pyruvoyl prosthetic group on the alpha chain.

It localises to the cell membrane. It catalyses the reaction a 1,2-diacyl-sn-glycero-3-phospho-L-serine + H(+) = a 1,2-diacyl-sn-glycero-3-phosphoethanolamine + CO2. It functions in the pathway phospholipid metabolism; phosphatidylethanolamine biosynthesis; phosphatidylethanolamine from CDP-diacylglycerol: step 2/2. Its function is as follows. Catalyzes the formation of phosphatidylethanolamine (PtdEtn) from phosphatidylserine (PtdSer). The chain is Phosphatidylserine decarboxylase proenzyme from Rickettsia africae (strain ESF-5).